Consider the following 788-residue polypeptide: Protein translocase subunit SecA (788 aa).

Residues Gln-85, 103–107 (GEGKT), and Asp-494 contribute to the ATP site.

It belongs to the SecA family. Monomer and homodimer. Part of the essential Sec protein translocation apparatus which comprises SecA, SecYEG and auxiliary proteins SecDF. Other proteins may also be involved.

The protein localises to the cell membrane. It localises to the cytoplasm. The catalysed reaction is ATP + H2O + cellular proteinSide 1 = ADP + phosphate + cellular proteinSide 2.. Functionally, part of the Sec protein translocase complex. Interacts with the SecYEG preprotein conducting channel. Has a central role in coupling the hydrolysis of ATP to the transfer of proteins into and across the cell membrane, serving as an ATP-driven molecular motor driving the stepwise translocation of polypeptide chains across the membrane. The protein is Protein translocase subunit SecA of Oenococcus oeni (strain ATCC BAA-331 / PSU-1).